Consider the following 45-residue polypeptide: Cytochrome b559 subunit beta (45 aa).

The helical transmembrane segment at 20–36 (WLAVHTLAVPTVFFLGA) threads the bilayer. Histidine 24 contributes to the heme binding site.

Belongs to the PsbE/PsbF family. In terms of assembly, heterodimer of an alpha subunit and a beta subunit. PSII is composed of 1 copy each of membrane proteins PsbA, PsbB, PsbC, PsbD, PsbE, PsbF, PsbH, PsbI, PsbJ, PsbK, PsbL, PsbM, PsbT, PsbX, PsbY, PsbZ, Psb30/Ycf12, peripheral proteins PsbO, CyanoQ (PsbQ), PsbU, PsbV and a large number of cofactors. It forms dimeric complexes. Requires heme b as cofactor.

It localises to the cellular thylakoid membrane. This b-type cytochrome is tightly associated with the reaction center of photosystem II (PSII). PSII is a light-driven water:plastoquinone oxidoreductase that uses light energy to abstract electrons from H(2)O, generating O(2) and a proton gradient subsequently used for ATP formation. It consists of a core antenna complex that captures photons, and an electron transfer chain that converts photonic excitation into a charge separation. The sequence is that of Cytochrome b559 subunit beta from Trichormus variabilis (strain ATCC 29413 / PCC 7937) (Anabaena variabilis).